A 138-amino-acid chain; its full sequence is MPTINQLVRQGRKSISTKSDSPALNFGYNSKKKSLTNNPAPQKRGVATRVGTMTPKKPNSALRKYARVRLSNLIEVTAYIPGIGHNLQEHSVVLIRGGRVKDLPGVRYHIVRGALDTAGVDGRMQGRSKYGAKRPKKK.

The span at 1-22 (MPTINQLVRQGRKSISTKSDSP) shows a compositional bias: polar residues. Residues 1-45 (MPTINQLVRQGRKSISTKSDSPALNFGYNSKKKSLTNNPAPQKRG) are disordered. Asp-102 carries the 3-methylthioaspartic acid modification.

This sequence belongs to the universal ribosomal protein uS12 family. As to quaternary structure, part of the 30S ribosomal subunit. Contacts proteins S8 and S17. May interact with IF1 in the 30S initiation complex.

With S4 and S5 plays an important role in translational accuracy. In terms of biological role, interacts with and stabilizes bases of the 16S rRNA that are involved in tRNA selection in the A site and with the mRNA backbone. Located at the interface of the 30S and 50S subunits, it traverses the body of the 30S subunit contacting proteins on the other side and probably holding the rRNA structure together. The combined cluster of proteins S8, S12 and S17 appears to hold together the shoulder and platform of the 30S subunit. This is Small ribosomal subunit protein uS12 from Lacticaseibacillus paracasei (strain ATCC 334 / BCRC 17002 / CCUG 31169 / CIP 107868 / KCTC 3260 / NRRL B-441) (Lactobacillus paracasei).